Consider the following 244-residue polypeptide: Cobalt transport protein CbiM (244 aa).

A signal peptide spans 1–28 (MKKLWKFIPFVLMGVIYFTLTNPESAHA). The next 6 membrane-spanning stretches (helical) occupy residues 37-57 (PVKW…LGLI), 71-91 (LLLA…IPSV), 103-123 (LATV…VLLF), 135-155 (TLGA…FVVY), 166-186 (SVSI…TTSV), and 206-226 (FMAI…LLTV).

Belongs to the CbiM family. In terms of assembly, forms an energy-coupling factor (ECF) transporter complex composed of an ATP-binding protein (A component, CbiO), a transmembrane protein (T component, CbiQ) and 2 possible substrate-capture proteins (S components, CbiM and CbiN) of unknown stoichimetry.

It localises to the cell membrane. It functions in the pathway cofactor biosynthesis; adenosylcobalamin biosynthesis. Its function is as follows. Part of the energy-coupling factor (ECF) transporter complex CbiMNOQ involved in cobalt import. The sequence is that of Cobalt transport protein CbiM from Listeria seeligeri serovar 1/2b (strain ATCC 35967 / DSM 20751 / CCM 3970 / CCUG 15530 / CIP 100100 / LMG 11386 / NCTC 11856 / SLCC 3954 / 1120).